The sequence spans 744 residues: Tripartite motif-containing protein 2 (744 aa).

Ser-10 carries the phosphoserine modification. Residues 23-64 (CSICLERYKNPKVLPCLHTFCERCLQNYIPAHSLTLSCPVCR) form an RING-type zinc finger. The B box-type zinc-finger motif lies at 113–154 (GKPLSCPNHDGNVMEFYCQSCETAMCRECTEGEHAEHPTVPL). Zn(2+)-binding residues include Cys-118, His-121, Cys-141, and His-146. A Filamin repeat occupies 320–421 (TTNAVASETV…IRGSPFKLKV (102 aa)). Residue Thr-371 is modified to Phosphothreonine. 3 positions are modified to phosphoserine: Ser-375, Ser-424, and Ser-428. The disordered stretch occupies residues 432 to 462 (EGVKRRVKSPGSGHVKQKAVKRPASMYSTGK). 6 NHL repeats span residues 473–516 (IFRV…FSND), 520–563 (KSRF…FSND), 564–605 (GKFK…FQPN), 609–652 (VTRF…FNQE), 656–699 (MLKF…FDGS), and 700–743 (GSFL…YRYL).

The protein belongs to the TRIM/RBCC family. In terms of assembly, forms homooligomers. Interacts with TRIM3; this interaction reduces TRIM2 activity. Interacts with myosin V; myosin V may not be a substrate for ubiquitination. Interacts with NEFL. Interacts with phosphorylated BCL2L11. Interacts with SIRPA. Post-translationally, RING-type zinc finger-dependent and UBE2D1-dependent autoubiquitination. As to expression, highly expressed in the cerebellum, hippocampus, retina and spinal cord. In the cerebellum, strongest expression in Purkinje cells and in the deep cerebellar nuclei. In retina, high expression in the ganglionic cell layer, inner nuclear layer and inthe outer plexiform layer. Particularly high expression in the hippocampus, in pyramidal cells of CA1-CA3 hippocampal areas and ingranule cells of the dentate gyrus.

It localises to the cytoplasm. The catalysed reaction is S-ubiquitinyl-[E2 ubiquitin-conjugating enzyme]-L-cysteine + [acceptor protein]-L-lysine = [E2 ubiquitin-conjugating enzyme]-L-cysteine + N(6)-ubiquitinyl-[acceptor protein]-L-lysine.. Its pathway is protein modification; protein ubiquitination. UBE2D1-dependent E3 ubiquitin-protein ligase that mediates the ubiquitination of NEFL and of phosphorylated BCL2L11. Plays a neuroprotective function. May play a role in neuronal rapid ischemic tolerance. Plays a role in antiviral immunity and limits new world arenavirus infection independently of its ubiquitin ligase activity by decreasing virus internalization. This chain is Tripartite motif-containing protein 2 (Trim2), found in Mus musculus (Mouse).